The sequence spans 31 residues: uncharacterized protein (31 aa).

This is an uncharacterized protein from Chlamydia phage 1 (Bacteriophage Chp1).